A 103-amino-acid chain; its full sequence is NADH-quinone oxidoreductase subunit K 2 (103 aa).

The next 3 helical transmembrane spans lie at 7 to 27, 31 to 51, and 63 to 83; these read LAWY…GFMI, IITI…TFVA, and IFVF…LGII.

This sequence belongs to the complex I subunit 4L family. In terms of assembly, NDH-1 is composed of 14 different subunits. Subunits NuoA, H, J, K, L, M, N constitute the membrane sector of the complex.

It is found in the cell inner membrane. The enzyme catalyses a quinone + NADH + 5 H(+)(in) = a quinol + NAD(+) + 4 H(+)(out). Functionally, NDH-1 shuttles electrons from NADH, via FMN and iron-sulfur (Fe-S) centers, to quinones in the respiratory chain. The immediate electron acceptor for the enzyme in this species is believed to be ubiquinone. Couples the redox reaction to proton translocation (for every two electrons transferred, four hydrogen ions are translocated across the cytoplasmic membrane), and thus conserves the redox energy in a proton gradient. The polypeptide is NADH-quinone oxidoreductase subunit K 2 (Koribacter versatilis (strain Ellin345)).